We begin with the raw amino-acid sequence, 235 residues long: Uridylate kinase (235 aa).

8–11 (KFSG) contributes to the ATP binding site. The tract at residues 16–21 (GAEGYG) is involved in allosteric activation by GTP. Glycine 50 is a binding site for UMP. 2 residues coordinate ATP: glycine 51 and arginine 55. Residues aspartate 71 and 132-139 (TGNPYFTT) contribute to the UMP site. Positions 159, 165, and 168 each coordinate ATP.

This sequence belongs to the UMP kinase family. In terms of assembly, homohexamer.

The protein resides in the cytoplasm. It catalyses the reaction UMP + ATP = UDP + ADP. It functions in the pathway pyrimidine metabolism; CTP biosynthesis via de novo pathway; UDP from UMP (UMPK route): step 1/1. With respect to regulation, allosterically activated by GTP. Inhibited by UTP. Catalyzes the reversible phosphorylation of UMP to UDP. In Aliarcobacter butzleri (strain RM4018) (Arcobacter butzleri), this protein is Uridylate kinase.